The following is a 370-amino-acid chain: MEVSNLSGATPGLAFPPGPESCSDSPSSGRSMGSTPGGLILPGREPPFSAFTVLVVTLLVLLIAATFLWNLLVLVTILRVRAFHRVPHNLVASTAVSDVLVAVLVMPLSLVSELSAGRRWQLGRSLCHVWISFDVLCCTASIWNVAAIALDRYWTITRHLQYTLRTRSRASALMIAITWALSALIALAPLLFGWGEAYDARLQRCQVSQEPSYAVFSTCGAFYLPLAVVLFVYWKIYKAAKFRFGRRRRAVVPLPATTQAKEAPPESEMVFTARRRATVTFQTSGDSWREQKEKRAAMMVGILIGVFVLCWIPFFLTELISPLCACSLPPIWKSIFLWLGYSNSFFNPLIYTAFNKNYNNAFKSLFTKQR.

The tract at residues 1–36 (MEVSNLSGATPGLAFPPGPESCSDSPSSGRSMGSTP) is disordered. At 1 to 48 (MEVSNLSGATPGLAFPPGPESCSDSPSSGRSMGSTPGGLILPGREPPF) the chain is on the extracellular side. N5 carries N-linked (GlcNAc...) asparagine glycosylation. Residues 20–36 (ESCSDSPSSGRSMGSTP) show a composition bias toward low complexity. A helical transmembrane segment spans residues 49–75 (SAFTVLVVTLLVLLIAATFLWNLLVLV). Residues 76-88 (TILRVRAFHRVPH) lie on the Cytoplasmic side of the membrane. The chain crosses the membrane as a helical span at residues 89–115 (NLVASTAVSDVLVAVLVMPLSLVSELS). At 116-127 (AGRRWQLGRSLC) the chain is on the extracellular side. C127 and C205 are disulfide-bonded. The helical transmembrane segment at 128-150 (HVWISFDVLCCTASIWNVAAIAL) threads the bilayer. D134 contacts serotonin. At 151–168 (DRYWTITRHLQYTLRTRS) the chain is on the cytoplasmic side. The chain crosses the membrane as a helical span at residues 169-189 (RASALMIAITWALSALIALAP). Over 190–211 (LLFGWGEAYDARLQRCQVSQEP) the chain is Extracellular. Residues 212–233 (SYAVFSTCGAFYLPLAVVLFVY) traverse the membrane as a helical segment. The Cytoplasmic segment spans residues 234–300 (WKIYKAAKFR…QKEKRAAMMV (67 aa)). The helical transmembrane segment at 301-325 (GILIGVFVLCWIPFFLTELISPLCA) threads the bilayer. The Extracellular portion of the chain corresponds to 326–327 (CS). The chain crosses the membrane as a helical span at residues 328-352 (LPPIWKSIFLWLGYSNSFFNPLIYT). Topologically, residues 353 to 370 (AFNKNYNNAFKSLFTKQR) are cytoplasmic.

This sequence belongs to the G-protein coupled receptor 1 family. As to expression, expressed predominantly in the central nervous system; in the hippocampus, habenula, and the doral raphe.

The protein localises to the cell membrane. Functionally, G-protein coupled receptor for 5-hydroxytryptamine (serotonin), a biogenic hormone that functions as a neurotransmitter, a hormone and a mitogen. Also functions as a receptor for ergot alkaloid derivatives and other psychoactive substances. Ligand binding causes a conformation change that triggers signaling via guanine nucleotide-binding proteins (G proteins) and modulates the activity of downstream effectors. Htr5b is coupled to G(i)/G(o) G alpha proteins and mediates inhibitory neurotransmission: signaling inhibits adenylate cyclase activity and activates a phosphatidylinositol-calcium second messenger system that regulates the release of Ca(2+) ions from intracellular stores. The sequence is that of 5-hydroxytryptamine receptor 5B from Mus musculus (Mouse).